Reading from the N-terminus, the 341-residue chain is MKKILGIESSCDDTSVSIITEDREILSNIVISQNTEHADYKGVVPEIAARSHLANLEKAMKQALLESNTSLDEITAIAATSGPGLIGGVIVGSMFAKSLSSVLNKPFIAVNHLEGHALTARLTDNIPYPYLLLLASGGHCQFVAVLGLGKYKILGSTIDDAVGEAFDKVAKMLDLPFPGGPKIEKRAKLGDPYKYKFPKPIINSGDCNMSFSGLKTAVRTLIMSLQEINDTIINDIAASFQFTIGEILSSKILEAIKVYEQITNDFNRNIVIAGGVAANKYLQELLSNCTKIHGYQLIYPPTTLCTDNAAMIAYAGLERYNNGLFTPLNFCPKARWSLEEI.

2 residues coordinate Fe cation: histidine 112 and histidine 116. Substrate is bound by residues 134–138 (LASGG), aspartate 167, glycine 180, and asparagine 279. Aspartate 307 lines the Fe cation pocket.

The protein belongs to the KAE1 / TsaD family. Fe(2+) serves as cofactor.

The protein localises to the cytoplasm. It carries out the reaction L-threonylcarbamoyladenylate + adenosine(37) in tRNA = N(6)-L-threonylcarbamoyladenosine(37) in tRNA + AMP + H(+). Required for the formation of a threonylcarbamoyl group on adenosine at position 37 (t(6)A37) in tRNAs that read codons beginning with adenine. Is involved in the transfer of the threonylcarbamoyl moiety of threonylcarbamoyl-AMP (TC-AMP) to the N6 group of A37, together with TsaE and TsaB. TsaD likely plays a direct catalytic role in this reaction. The sequence is that of tRNA N6-adenosine threonylcarbamoyltransferase from Rickettsia bellii (strain OSU 85-389).